Here is a 69-residue protein sequence, read N- to C-terminus: Conotoxin Eb6.14 (69 aa).

The N-terminal stretch at 1–17 is a signal peptide; the sequence is VLIIAVLFLTACQLTTA. Residues 18–41 constitute a propeptide that is removed on maturation; it reads ETYSRGRQKHRARRSTDKNSKWTR. Disulfide bonds link Cys43/Cys57, Cys50/Cys61, and Cys56/Cys68.

It belongs to the conotoxin O1 superfamily. As to expression, expressed by the venom duct.

It localises to the secreted. This Conus ebraeus (Hebrew cone) protein is Conotoxin Eb6.14 (E1).